Reading from the N-terminus, the 398-residue chain is Cytochrome P450 165B3 (398 aa).

Cys347 is a heme binding site.

The protein belongs to the cytochrome P450 family. Requires heme as cofactor.

It participates in antibiotic biosynthesis; vancomycin biosynthesis. Functionally, involved in the coupling of aromatic side chains of the heptapeptide of vancomycin. This is Cytochrome P450 165B3 (cyp165B3) from Amycolatopsis orientalis (Nocardia orientalis).